The chain runs to 609 residues: QWRF motif-containing protein 4 (609 aa).

2 disordered regions span residues 1–227 (MQVG…IRGN) and 271–369 (EVSS…TAQS). Composition is skewed to polar residues over residues 11–21 (GKQQQSVSDAT) and 46–57 (EVSSRYRSPTPT). Low complexity-rich tracts occupy residues 98–110 (PVSD…PVSS) and 129–143 (SLSV…SVPV). The span at 151-180 (VTSSTDRTLRPSSSNIAHKQQSETTSVTRK) shows a compositional bias: polar residues. Low complexity-rich tracts occupy residues 271-285 (EVSS…SSTE) and 302-332 (SAPG…PSRG). The QWRF motif motif lies at 407-410 (QWRF). Positions 588–609 (EEEVRDDAESSPLLPLSKFQWP) are disordered.

This sequence belongs to the QWRF family.

The sequence is that of QWRF motif-containing protein 4 (QWRF4) from Arabidopsis thaliana (Mouse-ear cress).